Consider the following 350-residue polypeptide: 4-hydroxy-3-methylbut-2-en-1-yl diphosphate synthase (flavodoxin) (350 aa).

Cysteine 263, cysteine 266, cysteine 298, and glutamate 305 together coordinate [4Fe-4S] cluster.

Belongs to the IspG family. Requires [4Fe-4S] cluster as cofactor.

The catalysed reaction is (2E)-4-hydroxy-3-methylbut-2-enyl diphosphate + oxidized [flavodoxin] + H2O + 2 H(+) = 2-C-methyl-D-erythritol 2,4-cyclic diphosphate + reduced [flavodoxin]. Its pathway is isoprenoid biosynthesis; isopentenyl diphosphate biosynthesis via DXP pathway; isopentenyl diphosphate from 1-deoxy-D-xylulose 5-phosphate: step 5/6. Converts 2C-methyl-D-erythritol 2,4-cyclodiphosphate (ME-2,4cPP) into 1-hydroxy-2-methyl-2-(E)-butenyl 4-diphosphate. The polypeptide is 4-hydroxy-3-methylbut-2-en-1-yl diphosphate synthase (flavodoxin) (Nautilia profundicola (strain ATCC BAA-1463 / DSM 18972 / AmH)).